The following is a 360-amino-acid chain: Phosphoserine aminotransferase (360 aa).

Residue Arg43 participates in L-glutamate binding. Residues 77–78 (AS), Trp103, Thr152, Asp172, and Gln195 each bind pyridoxal 5'-phosphate. N6-(pyridoxal phosphate)lysine is present on Lys196. 237–238 (NT) serves as a coordination point for pyridoxal 5'-phosphate.

Belongs to the class-V pyridoxal-phosphate-dependent aminotransferase family. SerC subfamily. Homodimer. The cofactor is pyridoxal 5'-phosphate.

Its subcellular location is the cytoplasm. The enzyme catalyses O-phospho-L-serine + 2-oxoglutarate = 3-phosphooxypyruvate + L-glutamate. The catalysed reaction is 4-(phosphooxy)-L-threonine + 2-oxoglutarate = (R)-3-hydroxy-2-oxo-4-phosphooxybutanoate + L-glutamate. It participates in amino-acid biosynthesis; L-serine biosynthesis; L-serine from 3-phospho-D-glycerate: step 2/3. Its pathway is cofactor biosynthesis; pyridoxine 5'-phosphate biosynthesis; pyridoxine 5'-phosphate from D-erythrose 4-phosphate: step 3/5. Catalyzes the reversible conversion of 3-phosphohydroxypyruvate to phosphoserine and of 3-hydroxy-2-oxo-4-phosphonooxybutanoate to phosphohydroxythreonine. In Syntrophobacter fumaroxidans (strain DSM 10017 / MPOB), this protein is Phosphoserine aminotransferase.